The following is a 499-amino-acid chain: Terminase, large subunit (499 aa).

An interaction with the terminase small subunit region spans residues 1 to 58; that stretch reads MELDAILDNLSDEEQIELLELLEEEENYRNTHLLYEFAPYSKQREFIDAGHDYPERCF. The interval 1-286 is ATPase activity; sequence MELDAILDNL…EHEREARARG (286 aa). The Walker A motif signature appears at 60–67; it reads AGNQLGKS. The short motif at 199-204 is the Walker B motif element; that stretch reads GVWFDE. Residue Glu204 is the For ATPase activity of the active site. Residues 312–482 form a nuclease activity region; that stretch reads DHFYVIDAQD…FARMMRDIRK (171 aa). The Mg(2+) site is built by Asp321 and Asp459.

The protein belongs to the Lederbergvirus large terminase family. Interacts with the terminase small subunit; the active complex is composed of dimer of terminase large subunits and a nonamer ring of terminase small subunits. Interacts with the portal protein; this interaction allows the packaging of viral DNA. Mg(2+) is required as a cofactor.

Functionally, the terminase large subunit acts as an ATP driven molecular motor necessary for viral DNA translocation into empty capsids and as an endonuclease that cuts the viral genome to initiate and to end a packaging reaction. The terminase lies at a unique vertex of the procapsid and is composed of two subunits, a small terminase subunit involved in viral DNA recognition (packaging 'pac' sequence), and a large terminase subunit possessing endonucleolytic and ATPase activities. Both terminase subunits heterooligomerize and are docked on the portal protein to form the packaging machine. Once the capsid is packaged with the DNA (headful packaging), the terminase cleaves the viral genome concatemer and is substituted by the tail. This is Terminase, large subunit (2) from Salmonella phage P22 (Bacteriophage P22).